The primary structure comprises 252 residues: DNA-(apurinic or apyrimidinic site) lyase Nei2 (252 aa).

Pro-2 (schiff-base intermediate with DNA) is an active-site residue. Glu-3 serves as the catalytic Proton donor. Lys-51 functions as the Proton donor (in beta-elimination) in the catalytic mechanism. The FPG-type zinc finger occupies 216 to 250; it reads WVYGRAGEPCRRCGTLIQTDRGGERVTYWCPVCQT. Zn(2+) contacts are provided by Cys-225, Cys-228, Cys-245, and Cys-248.

It belongs to the FPG family. Monomer. Zn(2+) serves as cofactor.

The enzyme catalyses 2'-deoxyribonucleotide-(2'-deoxyribose 5'-phosphate)-2'-deoxyribonucleotide-DNA = a 3'-end 2'-deoxyribonucleotide-(2,3-dehydro-2,3-deoxyribose 5'-phosphate)-DNA + a 5'-end 5'-phospho-2'-deoxyribonucleoside-DNA + H(+). Functionally, involved in base excision repair of DNA damaged by oxidation or by mutagenic agents. Acts as DNA glycosylase that recognizes and removes damaged bases. Involved in the repair of psoralen-UVA DNA cross-links. A lyase that cleaves single-stranded (ss)DNA but not double-stranded (ds)DNA with an abasic site. Has 5-hydroxyuracil (5-OH-U) glycosylase activity on ssDNA with 5-OH-U, with 10-fold less activity on dsDNA, but weak to no uracil glycosylase activity. Has weak glycosylase activity on thymine glycol and dihydrothymine residues in ssDNA. Cleaves the DNA backbone by beta-delta elimination to generate a single-strand break at the site of the removed base with both 3'- and 5'-phosphates. This Mycolicibacterium smegmatis (strain ATCC 700084 / mc(2)155) (Mycobacterium smegmatis) protein is DNA-(apurinic or apyrimidinic site) lyase Nei2.